Here is a 158-residue protein sequence, read N- to C-terminus: Small ribosomal subunit protein uS7 (158 aa).

This sequence belongs to the universal ribosomal protein uS7 family. As to quaternary structure, part of the 30S ribosomal subunit. Contacts proteins S9 and S11.

One of the primary rRNA binding proteins, it binds directly to 16S rRNA where it nucleates assembly of the head domain of the 30S subunit. Is located at the subunit interface close to the decoding center, probably blocks exit of the E-site tRNA. The chain is Small ribosomal subunit protein uS7 from Porphyromonas gingivalis (strain ATCC BAA-308 / W83).